An 863-amino-acid chain; its full sequence is Cilia- and flagella-associated protein 58 (863 aa).

Coiled-coil stretches lie at residues 107–600 (TVKE…NERD) and 631–815 (QSQY…KQVF). Residues 836–863 (GPSLLDQLPGGSGTGSGGMATGGGVGMS) are disordered. Positions 845 to 863 (GGSGTGSGGMATGGGVGMS) are enriched in gly residues.

It belongs to the CFAP58 family.

Its subcellular location is the cell projection. It localises to the cilium. The protein resides in the flagellum. In Chlamydomonas reinhardtii (Chlamydomonas smithii), this protein is Cilia- and flagella-associated protein 58.